The sequence spans 500 residues: Guanosine-5'-triphosphate,3'-diphosphate pyrophosphatase (500 aa).

It belongs to the GppA/Ppx family. GppA subfamily.

It catalyses the reaction guanosine 3'-diphosphate 5'-triphosphate + H2O = guanosine 3',5'-bis(diphosphate) + phosphate + H(+). The protein operates within purine metabolism; ppGpp biosynthesis; ppGpp from GTP: step 2/2. Its function is as follows. Catalyzes the conversion of pppGpp to ppGpp. Guanosine pentaphosphate (pppGpp) is a cytoplasmic signaling molecule which together with ppGpp controls the 'stringent response', an adaptive process that allows bacteria to respond to amino acid starvation, resulting in the coordinated regulation of numerous cellular activities. This chain is Guanosine-5'-triphosphate,3'-diphosphate pyrophosphatase, found in Photorhabdus laumondii subsp. laumondii (strain DSM 15139 / CIP 105565 / TT01) (Photorhabdus luminescens subsp. laumondii).